Here is a 443-residue protein sequence, read N- to C-terminus: Tubulin beta-2 chain (443 aa).

Positions 1-4 (MREI) match the MREI motif motif. Residues Q11, E69, S138, G142, T143, G144, N204, and N226 each coordinate GTP. E69 contacts Mg(2+). Position 438 is a 5-glutamyl polyglutamate (E438).

The protein belongs to the tubulin family. In terms of assembly, dimer of alpha and beta chains. A typical microtubule is a hollow water-filled tube with an outer diameter of 25 nm and an inner diameter of 15 nM. Alpha-beta heterodimers associate head-to-tail to form protofilaments running lengthwise along the microtubule wall with the beta-tubulin subunit facing the microtubule plus end conferring a structural polarity. Microtubules usually have 13 protofilaments but different protofilament numbers can be found in some organisms and specialized cells. Requires Mg(2+) as cofactor. Some glutamate residues at the C-terminus are polyglycylated, resulting in polyglycine chains on the gamma-carboxyl group. Glycylation is mainly limited to tubulin incorporated into axonemes (cilia and flagella) whereas glutamylation is prevalent in neuronal cells, centrioles, axonemes, and the mitotic spindle. Both modifications can coexist on the same protein on adjacent residues, and lowering polyglycylation levels increases polyglutamylation, and reciprocally. The precise function of polyglycylation is still unclear. In terms of processing, some glutamate residues at the C-terminus are polyglutamylated, resulting in polyglutamate chains on the gamma-carboxyl group. Polyglutamylation plays a key role in microtubule severing by spastin (SPAST). SPAST preferentially recognizes and acts on microtubules decorated with short polyglutamate tails: severing activity by SPAST increases as the number of glutamates per tubulin rises from one to eight, but decreases beyond this glutamylation threshold. In terms of tissue distribution, nervous system specific.

Its subcellular location is the cytoplasm. It localises to the cytoskeleton. Its function is as follows. Tubulin is the major constituent of microtubules, a cylinder consisting of laterally associated linear protofilaments composed of alpha- and beta-tubulin heterodimers. Microtubules grow by the addition of GTP-tubulin dimers to the microtubule end, where a stabilizing cap forms. Below the cap, tubulin dimers are in GDP-bound state, owing to GTPase activity of alpha-tubulin. The polypeptide is Tubulin beta-2 chain (tubb2) (Xenopus laevis (African clawed frog)).